The sequence spans 312 residues: Prephenate dehydratase (312 aa).

The region spanning 3–194 (GIAYLGPEGT…ARTRFVLVGR (192 aa)) is the Prephenate dehydratase domain. Positions 208 to 285 (SVVLQLDNVP…ADVRYLGSWP (78 aa)) constitute an ACT domain. The tract at residues 291-312 (GAAPPPMDESASWLEGLREGRP) is disordered.

In terms of assembly, homodimer.

It catalyses the reaction prephenate + H(+) = 3-phenylpyruvate + CO2 + H2O. The protein operates within amino-acid biosynthesis; L-phenylalanine biosynthesis; phenylpyruvate from prephenate: step 1/1. The protein is Prephenate dehydratase (pheA) of Mycolicibacterium vanbaalenii (strain DSM 7251 / JCM 13017 / BCRC 16820 / KCTC 9966 / NRRL B-24157 / PYR-1) (Mycobacterium vanbaalenii).